The following is a 364-amino-acid chain: Methylthioribose-1-phosphate isomerase (364 aa).

Substrate-binding positions include 53-55 (RGA), Arg-90, and Gln-203. Asp-244 acts as the Proton donor in catalysis. 254 to 255 (NK) contributes to the substrate binding site.

The protein belongs to the eIF-2B alpha/beta/delta subunits family. MtnA subfamily.

The catalysed reaction is 5-(methylsulfanyl)-alpha-D-ribose 1-phosphate = 5-(methylsulfanyl)-D-ribulose 1-phosphate. It participates in amino-acid biosynthesis; L-methionine biosynthesis via salvage pathway; L-methionine from S-methyl-5-thio-alpha-D-ribose 1-phosphate: step 1/6. Catalyzes the interconversion of methylthioribose-1-phosphate (MTR-1-P) into methylthioribulose-1-phosphate (MTRu-1-P). In Brucella anthropi (strain ATCC 49188 / DSM 6882 / CCUG 24695 / JCM 21032 / LMG 3331 / NBRC 15819 / NCTC 12168 / Alc 37) (Ochrobactrum anthropi), this protein is Methylthioribose-1-phosphate isomerase.